A 414-amino-acid chain; its full sequence is Hydroxysqualene dehydroxylase (414 aa).

This sequence belongs to the HpnE family.

The enzyme catalyses squalene + FAD + H2O + H(+) = hydroxysqualene + FADH2. The protein operates within secondary metabolite biosynthesis; hopanoid biosynthesis. Involved in the biosynthesis of the hopanoid precursor squalene (SQ) from farnesyl diphosphate (FPP). Catalyzes the third (last) step, the reduction of hydroxysqualene (HSQ) to SQ. The polypeptide is Hydroxysqualene dehydroxylase (Zymomonas mobilis subsp. mobilis (strain ATCC 31821 / ZM4 / CP4)).